The primary structure comprises 141 residues: Large ribosomal subunit protein uL11 (141 aa).

This sequence belongs to the universal ribosomal protein uL11 family. In terms of assembly, part of the ribosomal stalk of the 50S ribosomal subunit. Interacts with L10 and the large rRNA to form the base of the stalk. L10 forms an elongated spine to which L12 dimers bind in a sequential fashion forming a multimeric L10(L12)X complex. Post-translationally, one or more lysine residues are methylated.

Functionally, forms part of the ribosomal stalk which helps the ribosome interact with GTP-bound translation factors. This is Large ribosomal subunit protein uL11 from Thermotoga neapolitana (strain ATCC 49049 / DSM 4359 / NBRC 107923 / NS-E).